An 847-amino-acid polypeptide reads, in one-letter code: Ras GTPase-activating protein 2 (847 aa).

Positions 1–18 are enriched in low complexity; the sequence is MAAAAPAAAALTEAPAVP. The interval 1–31 is disordered; that stretch reads MAAAAPAAAALTEAPAVPGTAEPETGDEDSR. Residue alanine 2 is modified to N-acetylalanine. C2 domains lie at 19 to 137 and 148 to 288; these read GTAE…ETWF and VQGK…QAWY. The Ras-GAP domain occupies 371 to 588; the sequence is NKLVPFITAV…TDVKKFLDEI (218 aa). Position 554 is a phosphoserine (serine 554). In terms of domain architecture, PH spans 603 to 704; sequence VHLKEGEMYK…WIDMLCRVSR (102 aa). Residues 706–742 form a Btk-type zinc finger; it reads NHNRLSSFHPSAYLNGNWLCCQETSEGTPGCKPCTAG. Zn(2+) is bound by residues histidine 714, cysteine 725, cysteine 726, and cysteine 736. Residues 819–847 form a disordered region; that stretch reads DEPHEKYRKKRSSSAKYGSKENPIVGKIS.

As to expression, widely expressed. Higher expression in brain, placenta, and kidney.

It localises to the cell membrane. In terms of biological role, inhibitory regulator of the Ras-cyclic AMP pathway. May bind inositol tetrakisphosphate (IP4) and phospholipids. This chain is Ras GTPase-activating protein 2 (Rasa2), found in Rattus norvegicus (Rat).